The following is a 55-amino-acid chain: Neurotoxin BmP08 (55 aa).

A signal peptide spans 1–23 (MKIFFAVLVILVLFSMLIWTAYG). Disulfide bonds link Cys-30/Cys-45, Cys-36/Cys-50, and Cys-39/Cys-53.

As to expression, expressed by the venom gland.

Its subcellular location is the secreted. The sequence is that of Neurotoxin BmP08 from Olivierus martensii (Manchurian scorpion).